The following is a 319-amino-acid chain: Acetyl-coenzyme A carboxylase carboxyl transferase subunit alpha (319 aa).

The CoA carboxyltransferase C-terminal domain occupies 35 to 296 (DLEKEIKQLE…KQRLLEQLKE (262 aa)).

The protein belongs to the AccA family. In terms of assembly, acetyl-CoA carboxylase is a heterohexamer composed of biotin carboxyl carrier protein (AccB), biotin carboxylase (AccC) and two subunits each of ACCase subunit alpha (AccA) and ACCase subunit beta (AccD).

Its subcellular location is the cytoplasm. It catalyses the reaction N(6)-carboxybiotinyl-L-lysyl-[protein] + acetyl-CoA = N(6)-biotinyl-L-lysyl-[protein] + malonyl-CoA. It participates in lipid metabolism; malonyl-CoA biosynthesis; malonyl-CoA from acetyl-CoA: step 1/1. Component of the acetyl coenzyme A carboxylase (ACC) complex. First, biotin carboxylase catalyzes the carboxylation of biotin on its carrier protein (BCCP) and then the CO(2) group is transferred by the carboxyltransferase to acetyl-CoA to form malonyl-CoA. The protein is Acetyl-coenzyme A carboxylase carboxyl transferase subunit alpha of Aliivibrio fischeri (strain MJ11) (Vibrio fischeri).